The sequence spans 136 residues: IWDKRFKQINHFEQYLVENGIVVLKFFLNVSKEQQKKRFLARINEPEKNWKFSVSDAKERQHWDQYMEAFEDVFNNTSTSYAPWYIIPADHKWFTRLAVSDIIVSTLKSLHLSYPTVSEVRRAELLEAKKVLESEE.

This is an uncharacterized protein from Leptolyngbya boryana (Plectonema boryanum).